The sequence spans 427 residues: Peptidase B (427 aa).

Positions 195 and 200 each coordinate Mn(2+). Lys-207 is a catalytic residue. Residues Asp-218, Asp-277, and Glu-279 each coordinate Mn(2+). Arg-281 is a catalytic residue.

It belongs to the peptidase M17 family. In terms of assembly, homohexamer. Requires Mn(2+) as cofactor.

It is found in the cytoplasm. It catalyses the reaction Release of an N-terminal amino acid, Xaa, from a peptide or arylamide. Xaa is preferably Glu or Asp but may be other amino acids, including Leu, Met, His, Cys and Gln.. Its function is as follows. Probably plays an important role in intracellular peptide degradation. The polypeptide is Peptidase B (Escherichia coli O127:H6 (strain E2348/69 / EPEC)).